The following is a 253-amino-acid chain: RBPJ-interacting and tubulin-associated protein 1 (253 aa).

3 disordered regions span residues 30–89, 127–175, and 188–253; these read SPAR…KNKY, TPPA…LCVP, and HLTV…PPWK. Polar residues predominate over residues 71 to 81; that stretch reads SPSSRGSTPNL. A Nuclear localization signal motif is present at residues 81 to 97; that stretch reads LTPRKKNKYRLIGHAPS. The tract at residues 112–140 is interaction with RBPJ/RBPSUH; sequence RMAVGDAAKLRTLFWTPPATPRGSHTPCP. An interaction with tubulin region spans residues 140-253; the sequence is PRETPLRAIH…CPPKPKPPWK (114 aa). The segment covering 188–228 has biased composition (polar residues); the sequence is HLTVPSTGHPASSAPQTNGPWSPRPNTSGATVQSPLVTSKA.

It belongs to the RITA family. As to quaternary structure, interacts with RBPJ/RBPSUH.

The protein localises to the cytoplasm. It localises to the nucleus. It is found in the cytoskeleton. Its subcellular location is the microtubule organizing center. The protein resides in the centrosome. In terms of biological role, tubulin-binding protein that acts as a negative regulator of Notch signaling pathway. Shuttles between the cytoplasm and the nucleus and mediates the nuclear export of RBPJ/RBPSUH, thereby preventing the interaction between RBPJ/RBPSUH and NICD product of Notch proteins (Notch intracellular domain), leading to down-regulate Notch-mediated transcription. May play a role in neurogenesis. This is RBPJ-interacting and tubulin-associated protein 1 (Rita1) from Mus musculus (Mouse).